Reading from the N-terminus, the 85-residue chain is uncharacterized protein (85 aa).

The protein belongs to the SF3B5 family.

This is an uncharacterized protein from Schizosaccharomyces pombe (strain 972 / ATCC 24843) (Fission yeast).